A 137-amino-acid chain; its full sequence is Large ribosomal subunit protein uL16 (137 aa).

Belongs to the universal ribosomal protein uL16 family. As to quaternary structure, part of the 50S ribosomal subunit.

Its function is as follows. Binds 23S rRNA and is also seen to make contacts with the A and possibly P site tRNAs. In Lactococcus lactis subsp. lactis (strain IL1403) (Streptococcus lactis), this protein is Large ribosomal subunit protein uL16.